A 564-amino-acid polypeptide reads, in one-letter code: Urease subunit alpha (564 aa).

Positions glycine 126 to phenylalanine 564 constitute a Urease domain. Residues histidine 131, histidine 133, and lysine 214 each contribute to the Ni(2+) site. Lysine 214 carries the post-translational modification N6-carboxylysine. Substrate is bound at residue histidine 216. 2 residues coordinate Ni(2+): histidine 243 and histidine 269. Histidine 317 acts as the Proton donor in catalysis. Aspartate 357 is a binding site for Ni(2+).

The protein belongs to the metallo-dependent hydrolases superfamily. Urease alpha subunit family. Heterotrimer of UreA (gamma), UreB (beta) and UreC (alpha) subunits. Three heterotrimers associate to form the active enzyme. The cofactor is Ni cation. In terms of processing, carboxylation allows a single lysine to coordinate two nickel ions.

It is found in the cytoplasm. The enzyme catalyses urea + 2 H2O + H(+) = hydrogencarbonate + 2 NH4(+). It functions in the pathway nitrogen metabolism; urea degradation; CO(2) and NH(3) from urea (urease route): step 1/1. This chain is Urease subunit alpha, found in Burkholderia pseudomallei (strain 1710b).